Reading from the N-terminus, the 362-residue chain is Transcription factor Sox-7 (362 aa).

The tract at residues 21–41 (EDLSDGLSPHRSPREKGSETR) is disordered. Over residues 32 to 41 (SPREKGSETR) the composition is skewed to basic and acidic residues. The HMG box DNA-binding region spans 42–110 (IRRPMNAFMV…QHMQDYPNYK (69 aa)). One can recognise a Sox C-terminal domain in the interval 245-362 (QTGSSMIPPV…ATYYNSYSVS (118 aa)).

As to expression, expressed in the embryonic pronephric sinus as well as posterior cardinal veins.

The protein resides in the nucleus. In terms of biological role, transcription factor. Binds to the DNA sequence 5'-AACAAT-3'. Acts downstream of vegt and upstream of nodal signaling to promote endodermal and mesodermal differentiation by promoting vegt-induced expression of both endodermal genes (including endodermin) and mesodermal genes (including snai1/snail and snai2/slug). Induces expression of multiple nodal genes (including nodal, nodal2, nodal4, nodal5 and nodal6) and binds directly to sites within the promoter of the nodal5 gene. The endodermal and mesodermal specification pathways then interact to initiate cardiogenesis. Acts partially redundantly with sox18 during cardiogenesis. Also acts as an antagonist of beta-catenin signaling. Regulates (possibly indirectly) development of the pronephros, the functional larval kidney. The protein is Transcription factor Sox-7 of Xenopus tropicalis (Western clawed frog).